A 128-amino-acid chain; its full sequence is Type-4 ice-structuring protein LS-12 (128 aa).

A signal peptide spans 1–20; sequence MKFSLVATIVLLALAQGSFA. The residue at position 21 (Gln-21) is a Pyrrolidone carboxylic acid.

The protein belongs to the apolipoprotein A1/A4/E family.

The protein localises to the secreted. Its function is as follows. Antifreeze proteins lower the blood freezing point. In Myoxocephalus octodecemspinosus (Longhorn sculpin), this protein is Type-4 ice-structuring protein LS-12.